The chain runs to 223 residues: Endonuclease III (223 aa).

The HhH domain maps to 118–137 (RDFLTAIEGIGDKTADVVLL). [4Fe-4S] cluster contacts are provided by cysteine 198, cysteine 205, cysteine 208, and cysteine 214.

It belongs to the Nth/MutY family. [4Fe-4S] cluster serves as cofactor.

It carries out the reaction 2'-deoxyribonucleotide-(2'-deoxyribose 5'-phosphate)-2'-deoxyribonucleotide-DNA = a 3'-end 2'-deoxyribonucleotide-(2,3-dehydro-2,3-deoxyribose 5'-phosphate)-DNA + a 5'-end 5'-phospho-2'-deoxyribonucleoside-DNA + H(+). In terms of biological role, probably part of a 4-gene DNA damage response locus in which the upstream ups system, in combination with this downstream locus, functions in homologous recombination to rescue Sulfolobales from DNA-damaging threats. DNA repair enzyme that has both DNA N-glycosylase activity and AP-lyase activity. The DNA N-glycosylase activity releases various damaged pyrimidines from DNA by cleaving the N-glycosidic bond, leaving an AP (apurinic/apyrimidinic) site. The AP-lyase activity cleaves the phosphodiester bond 3' to the AP site by a beta-elimination, leaving a 3'-terminal unsaturated sugar and a product with a terminal 5'-phosphate. Nicks UV-treated plasmid DNA in a dose-dependent manner, has no activity on untreated DNA. The chain is Endonuclease III from Sulfolobus acidocaldarius (strain ATCC 33909 / DSM 639 / JCM 8929 / NBRC 15157 / NCIMB 11770).